The following is a 247-amino-acid chain: Protein McbF (247 aa).

In terms of domain architecture, ABC transporter spans 6–234 (LEINSLSFSY…NNETTQKRHL (229 aa)). ATP is bound at residue 40 to 47 (GENPAGKT).

Belongs to the ABC transporter superfamily.

Its function is as follows. Together with two further proteins McbE and McbG this protein causes immunity to the peptide antibiotic microcin B17, which inhibits DNA replication in enterobacteriaceae. Immunity is determined by two different mechanisms. McbE is involved in the production of extracellular MccB17 and, in a complex with mcbf it also serves as 'pump' for the export of active MccB17 from the cytoplasm to the periplasmic space. In Escherichia coli, this protein is Protein McbF (mcbF).